We begin with the raw amino-acid sequence, 163 residues long: Transcriptional repressor NrdR (163 aa).

The tract at residues 1–22 (MRCPKCQSLKSSVIDSRQAEDG) is disordered. A zinc finger spans residues 3–34 (CPKCQSLKSSVIDSRQAEDGNTIRRRRSCDQC). One can recognise an ATP-cone domain in the interval 49–139 (LVVVKKDGTR…VYRSFKDVGE (91 aa)).

The protein belongs to the NrdR family. Zn(2+) is required as a cofactor.

Functionally, negatively regulates transcription of bacterial ribonucleotide reductase nrd genes and operons by binding to NrdR-boxes. The chain is Transcriptional repressor NrdR from Streptococcus suis (strain 98HAH33).